The following is a 142-amino-acid chain: Hemoglobin subunit alpha (142 aa).

The Globin domain maps to 2 to 142 (VLSAADKTNV…VSTVLTSKYR (141 aa)). Ser4 carries the phosphoserine modification. Position 8 is an N6-succinyllysine (Lys8). Thr9 carries the phosphothreonine modification. Lys12 carries the N6-succinyllysine modification. Position 17 is an N6-acetyllysine; alternate (Lys17). Residue Lys17 is modified to N6-succinyllysine; alternate. Lys41 is modified (N6-succinyllysine). Ser50 carries the phosphoserine modification. His59 provides a ligand contact to O2. His88 provides a ligand contact to heme b. Position 103 is a phosphoserine (Ser103). Thr109 is modified (phosphothreonine). 2 positions are modified to phosphoserine: Ser125 and Ser132. Thr135 and Thr138 each carry phosphothreonine. Ser139 carries the phosphoserine modification.

The protein belongs to the globin family. Heterotetramer of two alpha chains and two beta chains. As to expression, red blood cells.

Involved in oxygen transport from the lung to the various peripheral tissues. Functionally, hemopressin acts as an antagonist peptide of the cannabinoid receptor CNR1. Hemopressin-binding efficiently blocks cannabinoid receptor CNR1 and subsequent signaling. The chain is Hemoglobin subunit alpha (HBA) from Equus przewalskii (Przewalski's horse).